Consider the following 282-residue polypeptide: Small ribosomal subunit protein uS3 (282 aa).

The KH type-2 domain occupies 43-111 (IRRLMSKGME…QVQLNILEVK (69 aa)). Positions 217-282 (AQSQAAAPRA…IGKGSNGTEA (66 aa)) are disordered. The segment covering 228–240 (RRNERGDRPDRGA) has biased composition (basic and acidic residues). Positions 256-269 (AVATGSAPTGTAAT) are enriched in low complexity.

The protein belongs to the universal ribosomal protein uS3 family. In terms of assembly, part of the 30S ribosomal subunit. Forms a tight complex with proteins S10 and S14.

Its function is as follows. Binds the lower part of the 30S subunit head. Binds mRNA in the 70S ribosome, positioning it for translation. In Kineococcus radiotolerans (strain ATCC BAA-149 / DSM 14245 / SRS30216), this protein is Small ribosomal subunit protein uS3.